The sequence spans 72 residues: MPEVKSMFREVLPKQGQLSMEDVPTMVLCKPKLLPLKSVTLEKLEKMQKDAQEIIRQQELALKEQPPSEKAE.

This sequence belongs to the BBIP10 family.

The protein localises to the cell projection. It localises to the cilium. The protein resides in the cytoplasm. Its function is as follows. Required for primary cilia assembly. The polypeptide is BBSome-interacting protein 1 (bbip1) (Danio rerio (Zebrafish)).